Reading from the N-terminus, the 257-residue chain is Zinc transporter ZupT (257 aa).

The next 5 helical transmembrane spans lie at 5-25, 32-52, 61-81, 109-129, and 137-157; these read LILTLLAGAATFIGAFLAVLG, VLAFSLGFAAGIMLLISLMEM, GMSPVLGYGMFIIGLLGYFGL, AILLTLGISLHNFPEGIATFV, and LGMGIALAVALHNIPEGLAVA. Positions 120 and 123 each coordinate Fe(2+). Zn(2+) contacts are provided by Glu123 and His148. Fe(2+) contacts are provided by Asn149, Glu152, and Glu181. Position 152 (Glu152) interacts with Zn(2+). Helical transmembrane passes span 182 to 202, 203 to 223, and 236 to 256; these read ILGGVLAWLILGSLISPVVMA, AVMAAVAGIMVALSVDELMPL, and GVLCGMSVMGLSLVVLQTAGI.

It belongs to the ZIP transporter (TC 2.A.5) family. ZupT subfamily.

The protein resides in the cell inner membrane. The enzyme catalyses Zn(2+)(in) = Zn(2+)(out). Its function is as follows. Mediates zinc uptake. May also transport other divalent cations. This is Zinc transporter ZupT from Escherichia fergusonii (strain ATCC 35469 / DSM 13698 / CCUG 18766 / IAM 14443 / JCM 21226 / LMG 7866 / NBRC 102419 / NCTC 12128 / CDC 0568-73).